The primary structure comprises 238 residues: MAVVTLAEMMEAGAHFGHQTRRWNPKMSRYIYCARNGVHIIDLVQTAVCMNNAYKWVRSAARSGKRFLFVGTKKQASEVVAQEALRCGSSYVNQRWLGGMLTNWTTMKARIDRLKDLERMESSGAIAMRPKKEGAVLRRELERLQKYLGGLKNMRRIPDVVVLVDQRRETNAVLEARKLDISLVSMLDTNCDPDLCEVPIPCNDDAVRSIQLVLSRLADAINEGRHGGQDGRGDDGQG.

This sequence belongs to the universal ribosomal protein uS2 family.

This chain is Small ribosomal subunit protein uS2, found in Synechococcus sp. (strain CC9311).